The following is a 288-amino-acid chain: 4-diphosphocytidyl-2-C-methyl-D-erythritol kinase (288 aa).

The active site involves lysine 8. Position 90 to 100 (90 to 100 (PVGAGLAGGSS)) interacts with ATP. Aspartate 132 is an active-site residue.

The protein belongs to the GHMP kinase family. IspE subfamily.

The enzyme catalyses 4-CDP-2-C-methyl-D-erythritol + ATP = 4-CDP-2-C-methyl-D-erythritol 2-phosphate + ADP + H(+). Its pathway is isoprenoid biosynthesis; isopentenyl diphosphate biosynthesis via DXP pathway; isopentenyl diphosphate from 1-deoxy-D-xylulose 5-phosphate: step 3/6. Functionally, catalyzes the phosphorylation of the position 2 hydroxy group of 4-diphosphocytidyl-2C-methyl-D-erythritol. The polypeptide is 4-diphosphocytidyl-2-C-methyl-D-erythritol kinase (Chlamydia trachomatis serovar A (strain ATCC VR-571B / DSM 19440 / HAR-13)).